The chain runs to 258 residues: Ciliogenesis and planar polarity effector 2 (258 aa).

A small GTPase-like region spans residues 51-258 (IDTASYKIFV…LPSSPESAPG (208 aa)). GTP contacts are provided by serine 64, glycine 65, glycine 67, lysine 68, threonine 69, alanine 70, isoleucine 82, histidine 84, threonine 87, lysine 176, aspartate 178, and serine 206.

This sequence belongs to the small GTPase superfamily. Rab family. In terms of assembly, interacts with FUZ. Associates with the CPLANE (ciliogenesis and planar polarity effectors) complex via its interaction with FUZ.

It is found in the cytoplasm. The protein localises to the cytoskeleton. Its subcellular location is the cilium basal body. It localises to the microtubule organizing center. The protein resides in the centrosome. It is found in the centriole. Functionally, required for efficient primary cilia initiation, regulating a late step in cilia initiation. Plays a role in the final maturation of the mother centriole and ciliary vesicle that allows extension of the ciliary axoneme. This chain is Ciliogenesis and planar polarity effector 2 (Cplane2), found in Mus musculus (Mouse).